The primary structure comprises 496 residues: RNA-binding motif protein, Y chromosome, family 1 member A1 (496 aa).

Residues 8–85 (GKLFIGGLNR…KAIKVEQAKK (78 aa)) enclose the RRM domain. 2 disordered regions span residues 78–349 (IKVE…HRDY) and 452–496 (KDQR…SSRY). 2 stretches are compositionally biased toward low complexity: residues 97 to 114 (PASSRNRSPSGSLRSARG) and 149 to 159 (PVKRGPSSRSG). The span at 175 to 184 (NSWMGSQGPM) shows a compositional bias: polar residues. 6 stretches are compositionally biased toward basic and acidic residues: residues 204–214 (RNDRMSTRHDG), 242–253 (DNGHSNRDEHSS), 276–289 (AYRDYGHSRRDESY), 313–326 (GYRDYGHSRRHESY), 335–349 (SSRETRDYAPPHRDY), and 484–496 (GESRSEKGDSSRY).

As to quaternary structure, interacts with splicing factor proteins SFRS3/SRP20, TRA2B/SFRS10, KHDRBS1/SAM68 and KHDRBS3. As to expression, testis-specific.

Its subcellular location is the nucleus. In terms of biological role, RNA-binding protein involved in pre-mRNA splicing. Required for sperm development. Acts additively with TRA2B to promote exon 7 inclusion of the survival motor neuron SMN. Binds non-specifically to mRNAs. In Homo sapiens (Human), this protein is RNA-binding motif protein, Y chromosome, family 1 member A1 (RBMY1A1).